Reading from the N-terminus, the 209-residue chain is Response regulator protein VraR (209 aa).

Residues 4–120 (KVLFVDDHEM…DIAEAIRKTY (117 aa)) enclose the Response regulatory domain. Position 55 is a 4-aspartylphosphate (Asp-55). The 66-residue stretch at 141–206 (RAELYEMLTE…QAVIYAFQHN (66 aa)) folds into the HTH luxR-type domain. The H-T-H motif DNA-binding region spans 165-184 (NQEIASASHITIKTVKTHVS).

Post-translationally, phosphorylated by VraS.

It localises to the cytoplasm. Its function is as follows. Member of the two-component regulatory system VraS/VraR involved in the control of the cell wall peptidoglycan biosynthesis. The chain is Response regulator protein VraR (vraR) from Staphylococcus saprophyticus subsp. saprophyticus (strain ATCC 15305 / DSM 20229 / NCIMB 8711 / NCTC 7292 / S-41).